We begin with the raw amino-acid sequence, 133 residues long: Aspartate 1-decarboxylase (133 aa).

Catalysis depends on Ser26, which acts as the Schiff-base intermediate with substrate; via pyruvic acid. A Pyruvic acid (Ser) modification is found at Ser26. A substrate-binding site is contributed by Thr58. Tyr59 (proton donor) is an active-site residue. 74 to 76 contributes to the substrate binding site; it reads GAA.

It belongs to the PanD family. In terms of assembly, heterooctamer of four alpha and four beta subunits. Pyruvate is required as a cofactor. Is synthesized initially as an inactive proenzyme, which is activated by self-cleavage at a specific serine bond to produce a beta-subunit with a hydroxyl group at its C-terminus and an alpha-subunit with a pyruvoyl group at its N-terminus.

It localises to the cytoplasm. The enzyme catalyses L-aspartate + H(+) = beta-alanine + CO2. Its pathway is cofactor biosynthesis; (R)-pantothenate biosynthesis; beta-alanine from L-aspartate: step 1/1. Functionally, catalyzes the pyruvoyl-dependent decarboxylation of aspartate to produce beta-alanine. This Legionella pneumophila subsp. pneumophila (strain Philadelphia 1 / ATCC 33152 / DSM 7513) protein is Aspartate 1-decarboxylase.